The following is a 96-amino-acid chain: SAGA complex subunit SUS1 (96 aa).

Residue lysine 68 forms a Glycyl lysine isopeptide (Lys-Gly) (interchain with G-Cter in ubiquitin) linkage.

It belongs to the ENY2 family. As to quaternary structure, component of the 1.8 MDa SAGA (Spt-Ada-Gcn5 acetyltransferase) complex, which is composed of 19 subunits TRA1, SPT7, TAF5, NGG1/ADA3, SGF73, SPT20/ADA5, SPT8, TAF12, TAF6, HFI1/ADA1, UBP8, GCN5, ADA2, SPT3, SGF29, TAF10, TAF9, SGF11 and SUS1. The SAGA complex is composed of 4 modules, namely the HAT (histone acetyltransferase) module (GCN5, ADA2, NGG1/ADA3 and SGF29), the DUB (deubiquitinating) module (UBP8, SGF11, SGF73 and SUS1), the core or TAF (TBP-associated factor) module (TAF5, TAF6, TAF9, TAF10 and TAF12), and the Tra1 or SPT (Suppressor of Ty) module (TRA1, HFI1/ADA1, SPT3, SPT7, SPT8 and SPT20/ADA5). The Tra1/SPT module binds activators, the core module recruits TBP (TATA-binding protein), the HAT module contains the histone H3 acetyltransferase GCN5, and the DUB module comprises the histone H2B deubiquitinase UBP8. Also identified in an altered form of SAGA, named SALSA (SAGA altered, Spt8 absent) or SLIK (SAGA-like) complex, which contains a C-terminal truncated form of SPT7 and is missing SPT8. However, it has been shown that the SAGA and SAGA-like SALSA/SLIK transcriptional coactivators are structurally and biochemically equivalent. Component of the nuclear pore complex (NPC)-associated TREX-2 complex (transcription and export complex 2), composed of at least SUS1, SAC3, THP1, SEM1, and CDC31. TREX-2 contains 2 SUS1 chains. The TREX-2 complex interacts with the mRNA export factors MEX67, MTR2 and SUB2, and the nucleoporin NUP1. Interacts directly with THP1, SAC3. Interacts directly with SGF11 and UBP8. Interacts with YRA1, MEX67 and with the RNA polymerase II.

Its subcellular location is the nucleus. It localises to the nucleoplasm. The protein resides in the cytoplasm. The protein localises to the P-body. In terms of biological role, involved in mRNA export coupled transcription activation by association with both the TREX-2 and the SAGA complexes. SAGA acts as a general cofactor required for essentially all RNA polymerase II transcription. At the promoters, SAGA is required for transcription pre-initiation complex (PIC) recruitment. It influences RNA polymerase II transcriptional activity through different activities such as TBP interaction (via core/TAF module) and promoter selectivity, interaction with transcription activators (via Tra1/SPT module), and chromatin modification through histone acetylation (via HAT module) and deubiquitination (via DUB module). SAGA preferentially acetylates histones H3 (to form H3K9ac, H3K14ac, H3K18ac and H3K23ac) and H2B and deubiquitinates histone H2B. SAGA interacts with DNA via upstream activating sequences (UASs). Also identified in a modified version of SAGA named SALSA or SLIK. The cleavage of SPT7 and the absence of the SPT8 subunit in SLIK neither drive any major conformational differences in its structure compared with SAGA, nor significantly affect HAT, DUB, or DNA-binding activities. Within the SAGA complex, participates in a subcomplex with SGF11, SGF73 and UBP8 required for deubiquitination of H2B and for the maintenance of steady-state H3 methylation levels. The TREX-2 complex functions in docking export-competent ribonucleoprotein particles (mRNPs) to the nuclear entrance of the nuclear pore complex (nuclear basket), by association with components of the nuclear mRNA export machinery (MEX67-MTR2 and SUB2) in the nucleoplasm and the nucleoporin NUP1 at the nuclear basket. TREX-2 participates in mRNA export and accurate chromatin positioning in the nucleus by tethering genes to the nuclear periphery. SUS1 also has a role in mRNP biogenesis and maintenance of genome integrity through preventing RNA-mediated genome instability. Has a role in response to DNA damage induced by methyl methane sulfonate (MMS) and replication arrest induced by hydroxyurea. May also be involved in cytoplasmic mRNA decay by interaction with components of P-bodies. The polypeptide is SAGA complex subunit SUS1 (Saccharomyces cerevisiae (strain ATCC 204508 / S288c) (Baker's yeast)).